Here is a 550-residue protein sequence, read N- to C-terminus: Phosphatidylinositol 4-kinase gamma 2 (550 aa).

Ubiquitin-like domains lie at 34 to 111 (SVLV…YDPL) and 112 to 190 (LVTV…VEDT). The tract at residues 228–247 (VDGLNKGSPPVRSAEGTGGT) is disordered. One can recognise a PI3K/PI4K catalytic domain in the interval 234–532 (GSPPVRSAEG…SVLPASSEAT (299 aa)). Positions 240–246 (SAEGTGG) are G-loop. Residues 241-247 (AEGTGGT), lysine 263, and 359-362 (QMFM) each bind ATP. Positions 392-400 (ANADRHAGN) are catalytic loop. Residues 415–441 (PIDHGYCLPENFEDCTFEWLYWPQAKL) form an activation loop region. Aspartate 417 contributes to the ATP binding site.

This sequence belongs to the PI3/PI4-kinase family. Type II PI4K subfamily.

It is found in the membrane. The catalysed reaction is a 1,2-diacyl-sn-glycero-3-phospho-(1D-myo-inositol) + ATP = a 1,2-diacyl-sn-glycero-3-phospho-(1D-myo-inositol 4-phosphate) + ADP + H(+). The phosphorylation of phosphatidylinositol (PI) to PI4P is the first committed step in the generation of phosphatidylinositol 4,5-bisphosphate (PIP2), a precursor of the second messenger inositol 1,4,5-trisphosphate (InsP3). This Arabidopsis thaliana (Mouse-ear cress) protein is Phosphatidylinositol 4-kinase gamma 2 (PI4KG2).